Here is a 55-residue protein sequence, read N- to C-terminus: ATP synthase F(0) complex subunit 8 (55 aa).

Residues 4–24 (LNPAPWFMIFMFTWAIFLTIL) form a helical membrane-spanning segment. The interval 34 to 55 (PNEPSPQGMTTPKTAPWNWPWH) is disordered.

This sequence belongs to the ATPase protein 8 family. As to quaternary structure, component of the ATP synthase complex composed at least of ATP5F1A/subunit alpha, ATP5F1B/subunit beta, ATP5MC1/subunit c (homooctomer), MT-ATP6/subunit a, MT-ATP8/subunit 8, ATP5ME/subunit e, ATP5MF/subunit f, ATP5MG/subunit g, ATP5MK/subunit k, ATP5MJ/subunit j, ATP5F1C/subunit gamma, ATP5F1D/subunit delta, ATP5F1E/subunit epsilon, ATP5PF/subunit F6, ATP5PB/subunit b, ATP5PD/subunit d, ATP5PO/subunit OSCP. ATP synthase complex consists of a soluble F(1) head domain (subunits alpha(3) and beta(3)) - the catalytic core - and a membrane F(0) domain - the membrane proton channel (subunits c, a, 8, e, f, g, k and j). These two domains are linked by a central stalk (subunits gamma, delta, and epsilon) rotating inside the F1 region and a stationary peripheral stalk (subunits F6, b, d, and OSCP).

It is found in the mitochondrion membrane. Subunit 8, of the mitochondrial membrane ATP synthase complex (F(1)F(0) ATP synthase or Complex V) that produces ATP from ADP in the presence of a proton gradient across the membrane which is generated by electron transport complexes of the respiratory chain. ATP synthase complex consist of a soluble F(1) head domain - the catalytic core - and a membrane F(1) domain - the membrane proton channel. These two domains are linked by a central stalk rotating inside the F(1) region and a stationary peripheral stalk. During catalysis, ATP synthesis in the catalytic domain of F(1) is coupled via a rotary mechanism of the central stalk subunits to proton translocation. In vivo, can only synthesize ATP although its ATP hydrolase activity can be activated artificially in vitro. Part of the complex F(0) domain. This is ATP synthase F(0) complex subunit 8 from Gadus morhua (Atlantic cod).